We begin with the raw amino-acid sequence, 428 residues long: Histidine--tRNA ligase (428 aa).

This sequence belongs to the class-II aminoacyl-tRNA synthetase family. As to quaternary structure, homodimer.

The protein localises to the cytoplasm. It carries out the reaction tRNA(His) + L-histidine + ATP = L-histidyl-tRNA(His) + AMP + diphosphate + H(+). In Staphylococcus carnosus (strain TM300), this protein is Histidine--tRNA ligase.